Here is a 268-residue protein sequence, read N- to C-terminus: 5'-nucleotidase SurE (268 aa).

A divalent metal cation-binding residues include Asp-24, Asp-25, Ser-55, and Asn-111.

The protein belongs to the SurE nucleotidase family. Requires a divalent metal cation as cofactor.

It localises to the cytoplasm. The catalysed reaction is a ribonucleoside 5'-phosphate + H2O = a ribonucleoside + phosphate. In terms of biological role, nucleotidase that shows phosphatase activity on nucleoside 5'-monophosphates. The sequence is that of 5'-nucleotidase SurE from Deinococcus radiodurans (strain ATCC 13939 / DSM 20539 / JCM 16871 / CCUG 27074 / LMG 4051 / NBRC 15346 / NCIMB 9279 / VKM B-1422 / R1).